We begin with the raw amino-acid sequence, 380 residues long: Cytochrome b (380 aa).

The next 4 membrane-spanning stretches (helical) occupy residues phenylalanine 33–methionine 53, tryptophan 77–valine 98, tryptophan 113–leucine 133, and phenylalanine 178–leucine 198. Heme b is bound by residues histidine 83 and histidine 97. Positions 182 and 196 each coordinate heme b. Histidine 201 contributes to the a ubiquinone binding site. The next 4 helical transmembrane spans lie at isoleucine 226–phenylalanine 246, leucine 288–asparagine 308, isoleucine 320–glycine 340, and phenylalanine 347–phenylalanine 367.

This sequence belongs to the cytochrome b family. The cytochrome bc1 complex contains 11 subunits: 3 respiratory subunits (MT-CYB, CYC1 and UQCRFS1), 2 core proteins (UQCRC1 and UQCRC2) and 6 low-molecular weight proteins (UQCRH/QCR6, UQCRB/QCR7, UQCRQ/QCR8, UQCR10/QCR9, UQCR11/QCR10 and a cleavage product of UQCRFS1). This cytochrome bc1 complex then forms a dimer. The cofactor is heme b.

It is found in the mitochondrion inner membrane. Component of the ubiquinol-cytochrome c reductase complex (complex III or cytochrome b-c1 complex) that is part of the mitochondrial respiratory chain. The b-c1 complex mediates electron transfer from ubiquinol to cytochrome c. Contributes to the generation of a proton gradient across the mitochondrial membrane that is then used for ATP synthesis. This chain is Cytochrome b (MT-CYB), found in Calomys musculinus (Drylands vesper mouse).